A 429-amino-acid polypeptide reads, in one-letter code: Nocturnin (429 aa).

A mitochondrion-targeting transit peptide spans 1–73; the sequence is MYQSPRRLCS…SMGNGTSRLY (73 aa). Positions 21 to 68 are disordered; sequence RRTLVPGPRRTLAPPVLGSRPKSPQLQAAAASGAARSRPRTVSSMGNG. Glu-193 contacts Mg(2+). Substrate contacts are provided by residues Glu-193, 217-219, Asn-261, 284-287, and 322-324; these read KPW, HLKA, and DFN. An interaction with PPARG region spans residues 341–351; that stretch reads NLNSAYKLLSP. Residue His-412 coordinates substrate.

Belongs to the CCR4/nocturin family. Interacts with PPARG. Mg(2+) serves as cofactor. In terms of tissue distribution, highly expressed in the differentiated adipocyte (at protein level). Ubiquitous.

It localises to the cytoplasm. The protein resides in the nucleus. Its subcellular location is the perinuclear region. The protein localises to the mitochondrion. The enzyme catalyses NADP(+) + H2O = phosphate + NAD(+). It carries out the reaction NADPH + H2O = phosphate + NADH. Functionally, phosphatase which catalyzes the conversion of NADP(+) to NAD(+) and of NADPH to NADH. Shows a small preference for NADPH over NADP(+). Represses translation and promotes degradation of target mRNA molecules. Plays an important role in post-transcriptional regulation of metabolic genes under circadian control. Exerts a rhythmic post-transcriptional control of genes necessary for metabolic functions including nutrient absorption, glucose/insulin sensitivity, lipid metabolism, adipogenesis, inflammation and osteogenesis. Plays an important role in favoring adipogenesis over osteoblastogenesis and acts as a key regulator of the adipogenesis/osteogenesis balance. Promotes adipogenesis by facilitating PPARG nuclear translocation which activates its transcriptional activity. Regulates circadian expression of NOS2 in the liver and negatively regulates the circadian expression of IGF1 in the bone. Critical for proper development of early embryos. The sequence is that of Nocturnin from Mus musculus (Mouse).